The sequence spans 307 residues: Elongation factor Ts (307 aa).

Positions 80–83 (TDFV) are involved in Mg(2+) ion dislocation from EF-Tu.

This sequence belongs to the EF-Ts family.

Its subcellular location is the cytoplasm. Its function is as follows. Associates with the EF-Tu.GDP complex and induces the exchange of GDP to GTP. It remains bound to the aminoacyl-tRNA.EF-Tu.GTP complex up to the GTP hydrolysis stage on the ribosome. This is Elongation factor Ts from Albidiferax ferrireducens (strain ATCC BAA-621 / DSM 15236 / T118) (Rhodoferax ferrireducens).